We begin with the raw amino-acid sequence, 442 residues long: Protein translocase subunit SecF (442 aa).

The tract at residues 1–39 (MASKAKTGRDDEATSAVELTEATESAVARTDGDSTTDTA) is disordered. The next 6 membrane-spanning stretches (helical) occupy residues 67–87 (WFGV…FRGF), 187–207 (ITKK…LYIT), 218–238 (AITA…LVGF), 243–263 (ATVI…VIVF), 301–321 (LIGV…LGVG), and 331–351 (LIGI…LLVT). Positions 366-442 (VLKRRNSGSP…PTGKRNAGRR (77 aa)) are disordered. The segment covering 402 to 432 (QASSQSAPRAAQGSSKPAPGARPVRPVGTRR) has biased composition (low complexity). Positions 433–442 (PTGKRNAGRR) are enriched in basic residues.

The protein belongs to the SecD/SecF family. SecF subfamily. Forms a complex with SecD. Part of the essential Sec protein translocation apparatus which comprises SecA, SecYEG and auxiliary proteins SecDF. Other proteins may also be involved.

It localises to the cell membrane. Its function is as follows. Part of the Sec protein translocase complex. Interacts with the SecYEG preprotein conducting channel. SecDF uses the proton motive force (PMF) to complete protein translocation after the ATP-dependent function of SecA. The chain is Protein translocase subunit SecF from Mycobacterium tuberculosis (strain ATCC 25618 / H37Rv).